Here is a 109-residue protein sequence, read N- to C-terminus: uncharacterized protein (109 aa).

The chain crosses the membrane as a helical span at residues 12-32 (PNILIKGVYIFVLYGMCICIV).

It is found in the membrane. This is an uncharacterized protein from Saccharomyces cerevisiae (strain ATCC 204508 / S288c) (Baker's yeast).